The primary structure comprises 224 residues: Charged multivesicular body protein 4c (224 aa).

Disordered stretches follow at residues 1–21 (MSVF…PTPQ) and 182–224 (SGPE…AWAM). The segment covering 7–17 (LFGGGGKGGKG) has biased composition (gly residues). Residues 21–221 (QEAIQKLRET…DEDDMEELKA (201 aa)) adopt a coiled-coil conformation.

This sequence belongs to the SNF7 family. As to quaternary structure, probable core component of the endosomal sorting required for transport complex III (ESCRT-III). ESCRT-III components are thought to multimerize to form a flat lattice on the perimeter membrane of the endosome.

It localises to the cytoplasm. It is found in the cytosol. The protein resides in the late endosome membrane. Its function is as follows. Probable core component of the endosomal sorting required for transport complex III (ESCRT-III) which is involved in multivesicular bodies (MVBs) formation and sorting of endosomal cargo proteins into MVBs. MVBs contain intraluminal vesicles (ILVs) that are generated by invagination and scission from the limiting membrane of the endosome and mostly are delivered to lysosomes enabling degradation of membrane proteins, such as stimulated growth factor receptors, lysosomal enzymes and lipids. Key component of the cytokinesis checkpoint, a process required to delay abscission to prevent both premature resolution of intercellular chromosome bridges and accumulation of DNA damage. This is Charged multivesicular body protein 4c (chmp4c) from Danio rerio (Zebrafish).